A 342-amino-acid chain; its full sequence is N-acetyl-gamma-glutamyl-phosphate reductase (342 aa).

The active site involves C149.

Belongs to the NAGSA dehydrogenase family. Type 1 subfamily.

The protein localises to the cytoplasm. It catalyses the reaction N-acetyl-L-glutamate 5-semialdehyde + phosphate + NADP(+) = N-acetyl-L-glutamyl 5-phosphate + NADPH + H(+). The protein operates within amino-acid biosynthesis; L-arginine biosynthesis; N(2)-acetyl-L-ornithine from L-glutamate: step 3/4. In terms of biological role, catalyzes the NADPH-dependent reduction of N-acetyl-5-glutamyl phosphate to yield N-acetyl-L-glutamate 5-semialdehyde. The sequence is that of N-acetyl-gamma-glutamyl-phosphate reductase from Cereibacter sphaeroides (strain ATCC 17025 / ATH 2.4.3) (Rhodobacter sphaeroides).